Here is a 547-residue protein sequence, read N- to C-terminus: (E)-beta-caryophyllene synthase (547 aa).

The Mg(2+) site is built by Asp302 and Asp306. The substrate site is built by Asp302, Asp306, Arg443, and Asn446. The DDXXD motif motif lies at 302–306; it reads DDLYD. Mg(2+)-binding residues include Asn446 and Glu454.

This sequence belongs to the terpene synthase family. As to quaternary structure, monomer. Mg(2+) is required as a cofactor. The cofactor is Mn(2+).

The protein localises to the cytoplasm. It catalyses the reaction (2E,6E)-farnesyl diphosphate = (-)-(E)-beta-caryophyllene + diphosphate. Its pathway is secondary metabolite biosynthesis; terpenoid biosynthesis. Its function is as follows. Component of the volatile terpenes biosynthesis pathways. Sesquiterpene synthase that converts farnesyl diphosphate to (E)-beta-caryophyllene. Involved in indirect defense by producing volatile signals attracting natural enemies of herbivores. This Zea mays (Maize) protein is (E)-beta-caryophyllene synthase.